A 397-amino-acid polypeptide reads, in one-letter code: ATP-dependent RNA helicase RhlB (397 aa).

The Q motif signature appears at threonine 9–alanine 37. In terms of domain architecture, Helicase ATP-binding spans leucine 40–valine 220. An ATP-binding site is contributed by alanine 53–threonine 60. A DEAD box motif is present at residues aspartate 166–aspartate 169. Residues aspartate 243–valine 393 enclose the Helicase C-terminal domain.

Belongs to the DEAD box helicase family. RhlB subfamily. As to quaternary structure, component of the RNA degradosome, which is a multiprotein complex involved in RNA processing and mRNA degradation.

The protein localises to the cytoplasm. It carries out the reaction ATP + H2O = ADP + phosphate + H(+). Functionally, DEAD-box RNA helicase involved in RNA degradation. Has RNA-dependent ATPase activity and unwinds double-stranded RNA. This is ATP-dependent RNA helicase RhlB from Pseudomonas aeruginosa (strain UCBPP-PA14).